Consider the following 62-residue polypeptide: Protein gp45.2 (62 aa).

May participate in replication-dependent transcriptional events during viral growth. The polypeptide is Protein gp45.2 (45.2) (Escherichia coli (Bacteriophage T4)).